Consider the following 320-residue polypeptide: Aspartate carbamoyltransferase catalytic subunit (320 aa).

Residues Arg-70 and Thr-71 each contribute to the carbamoyl phosphate site. Residue Lys-98 participates in L-aspartate binding. Residues Arg-120, His-149, and Gln-152 each coordinate carbamoyl phosphate. Arg-182 and Arg-237 together coordinate L-aspartate. Carbamoyl phosphate-binding residues include Gly-278 and Pro-279.

This sequence belongs to the aspartate/ornithine carbamoyltransferase superfamily. ATCase family. As to quaternary structure, heterododecamer (2C3:3R2) of six catalytic PyrB chains organized as two trimers (C3), and six regulatory PyrI chains organized as three dimers (R2).

It carries out the reaction carbamoyl phosphate + L-aspartate = N-carbamoyl-L-aspartate + phosphate + H(+). The protein operates within pyrimidine metabolism; UMP biosynthesis via de novo pathway; (S)-dihydroorotate from bicarbonate: step 2/3. Its function is as follows. Catalyzes the condensation of carbamoyl phosphate and aspartate to form carbamoyl aspartate and inorganic phosphate, the committed step in the de novo pyrimidine nucleotide biosynthesis pathway. The protein is Aspartate carbamoyltransferase catalytic subunit of Ruthia magnifica subsp. Calyptogena magnifica.